The following is a 152-amino-acid chain: Superoxide dismutase [Cu-Zn] (152 aa).

3 residues coordinate Cu cation: histidine 44, histidine 46, and histidine 61. Zn(2+) is bound by residues histidine 61, histidine 69, histidine 78, and aspartate 81. Histidine 118 provides a ligand contact to Cu cation.

This sequence belongs to the Cu-Zn superoxide dismutase family. Homodimer. Cu cation serves as cofactor. Requires Zn(2+) as cofactor.

It is found in the cytoplasm. The catalysed reaction is 2 superoxide + 2 H(+) = H2O2 + O2. Functionally, destroys radicals which are normally produced within the cells and which are toxic to biological systems. In Drosophila pseudoobscura pseudoobscura (Fruit fly), this protein is Superoxide dismutase [Cu-Zn].